We begin with the raw amino-acid sequence, 327 residues long: Phenylalanine--tRNA ligase alpha subunit (327 aa).

Position 252 (E252) interacts with Mg(2+).

Belongs to the class-II aminoacyl-tRNA synthetase family. Phe-tRNA synthetase alpha subunit type 1 subfamily. Tetramer of two alpha and two beta subunits. Mg(2+) is required as a cofactor.

Its subcellular location is the cytoplasm. The enzyme catalyses tRNA(Phe) + L-phenylalanine + ATP = L-phenylalanyl-tRNA(Phe) + AMP + diphosphate + H(+). This chain is Phenylalanine--tRNA ligase alpha subunit, found in Hamiltonella defensa subsp. Acyrthosiphon pisum (strain 5AT).